The primary structure comprises 401 residues: MNRPVTRKDLMIVNIGPHHPSMHGVLRLIVTLDGGDVVDCEPILGYLHRGMEKIAENRAIIQYLPYVTRWDYLATMFTEAITVNGPEQLGNIQVPKRASYIRVIMLELSRIASHLLWLGPFMADIGAQTPFFYIFREREFVYDLFEAATGMRMMHNFFRIGGIAADLPYGWIDKCLDFCDYFLTEVVEYQKLITRNPIFLERVEGVGILGGEEAINWGLSGPMLRASGIQWDLRKVDRYECYDEFEWEIQWQKQGDSLARYLVRLSEMTESIKIIQQALEGLPGGPYENLERRGFDRKMNSEMNSEMNSEWNNFDYRFISKKPSPTFELSKQELYVRVEAPKGELGIFLIGDQSGFPWRWKIRPPGFINLQILPELVKRMKLADIMTILGSIDIIMGEVDR.

It belongs to the complex I 49 kDa subunit family. As to quaternary structure, NDH is composed of at least 16 different subunits, 5 of which are encoded in the nucleus.

It localises to the plastid. The protein resides in the chloroplast thylakoid membrane. It catalyses the reaction a plastoquinone + NADH + (n+1) H(+)(in) = a plastoquinol + NAD(+) + n H(+)(out). It carries out the reaction a plastoquinone + NADPH + (n+1) H(+)(in) = a plastoquinol + NADP(+) + n H(+)(out). Functionally, NDH shuttles electrons from NAD(P)H:plastoquinone, via FMN and iron-sulfur (Fe-S) centers, to quinones in the photosynthetic chain and possibly in a chloroplast respiratory chain. The immediate electron acceptor for the enzyme in this species is believed to be plastoquinone. Couples the redox reaction to proton translocation, and thus conserves the redox energy in a proton gradient. The polypeptide is NAD(P)H-quinone oxidoreductase subunit H, chloroplastic (Aethionema cordifolium (Lebanon stonecress)).